The chain runs to 1210 residues: A disintegrin and metalloproteinase with thrombospondin motifs 19 (1210 aa).

The N-terminal stretch at 1–30 (MGPEMRLTRICCCCCLLYQLGFLSHGTTSG) is a signal peptide. The propeptide occupies 31–319 (LQLTPDLEEW…KIADNRREKR (289 aa)). N-linked (GlcNAc...) asparagine glycosylation is present at Asn54. The disordered stretch occupies residues 55 to 166 (ATGLSGGSSD…PAQQEEPSAE (112 aa)). Residues 69–78 (RSSGGGGRGQ) show a composition bias toward gly residues. Residues 84-98 (REVRSVARAPQEEAT) are compositionally biased toward basic and acidic residues. The segment covering 113–122 (GAEDEEELES) has biased composition (acidic residues). The segment covering 130–139 (SGDTALSSGT) has biased composition (polar residues). Residues 143 to 158 (WQPPLPPQRPSSPPPA) are compositionally biased toward pro residues. Asn263 carries N-linked (GlcNAc...) asparagine glycosylation. The Cysteine switch signature appears at 295 to 302 (HHCGVISD). Cys297 contacts Zn(2+). Residues 328–548 (YNIETVVVAD…KASSCLLHTD (221 aa)) enclose the Peptidase M12B domain. Disulfide bonds link Cys404–Cys469, Cys444–Cys451, Cys463–Cys543, Cys502–Cys527, Cys572–Cys596, Cys583–Cys604, Cys591–Cys623, Cys617–Cys628, Cys648–Cys683, Cys652–Cys688, and Cys663–Cys673. His485 provides a ligand contact to Zn(2+). Glu486 is an active-site residue. Positions 489 and 495 each coordinate Zn(2+). Residues 549-636 (PQSLSSVLVP…ECTRRTPAPE (88 aa)) form the Disintegrin domain. One can recognise a TSP type-1 1 domain in the interval 637 to 689 (HLAGEWSPWSSCSRSCSSGVSSRERKCPGLGSEARDCNGPRKQYRICENPPCP). Residues 794–917 (VIKGDFNHTR…PDNQSSKEPG (124 aa)) form a spacer region. Asn800, Asn910, Asn931, Asn952, and Asn1012 each carry an N-linked (GlcNAc...) asparagine glycan. TSP type-1 domains follow at residues 918–978 (PLFM…NEQP), 979–1040 (CQTR…QDCM), 1042–1086 (VWEA…EDCE), and 1090–1147 (KCYV…QPCN). Intrachain disulfides connect Cys991-Cys1034, Cys995-Cys1039, and Cys1006-Cys1023. The PLAC domain occupies 1163–1202 (LTFKCLGDQWPVYCRVIREKNLCQDMRWYQRCCETCRDFY).

Zn(2+) is required as a cofactor. Post-translationally, the precursor is cleaved by a furin endopeptidase. In terms of processing, glycosylated. Can be O-fucosylated by POFUT2 on a serine or a threonine residue found within the consensus sequence C1-X(2)-(S/T)-C2-G of the TSP type-1 repeat domains where C1 and C2 are the first and second cysteine residue of the repeat, respectively. Fucosylated repeats can then be further glycosylated by the addition of a beta-1,3-glucose residue by the glucosyltransferase, B3GALTL. Fucosylation mediates the efficient secretion of ADAMTS family members. Can also be C-glycosylated with one or two mannose molecules on tryptophan residues within the consensus sequence W-X-X-W of the TPRs, and N-glycosylated. These other glycosylations can also facilitate secretion. In terms of tissue distribution, expressed predominantly in fetal ovary, low levels of expression is also detected in kidney, heart, skeletal muscle, lung and testis.

Its subcellular location is the secreted. The protein resides in the extracellular space. It is found in the extracellular matrix. The chain is A disintegrin and metalloproteinase with thrombospondin motifs 19 (Adamts19) from Mus musculus (Mouse).